Reading from the N-terminus, the 43-residue chain is Protein PsbN (43 aa).

A helical transmembrane segment spans residues 7 to 27; sequence LVVAIAAITICITAFAIYTAF.

The protein belongs to the PsbN family.

It localises to the cellular thylakoid membrane. Functionally, may play a role in photosystem I and II biogenesis. This Synechococcus sp. (strain JA-3-3Ab) (Cyanobacteria bacterium Yellowstone A-Prime) protein is Protein PsbN.